We begin with the raw amino-acid sequence, 254 residues long: Adenosylcobinamide-GDP ribazoletransferase (254 aa).

7 consecutive transmembrane segments (helical) span residues 27 to 47 (SSLY…VLFA), 50 to 70 (GMGA…GFIL), 104 to 124 (VGSF…ICLL), 131 to 151 (AYGM…LLAA), 170 to 190 (AGWP…FVLL), 194 to 214 (VVPS…VGWL), and 233 to 253 (LVEI…FSAI).

The protein belongs to the CobS family. Requires Mg(2+) as cofactor.

It is found in the cell inner membrane. It catalyses the reaction alpha-ribazole + adenosylcob(III)inamide-GDP = adenosylcob(III)alamin + GMP + H(+). It carries out the reaction alpha-ribazole 5'-phosphate + adenosylcob(III)inamide-GDP = adenosylcob(III)alamin 5'-phosphate + GMP + H(+). It participates in cofactor biosynthesis; adenosylcobalamin biosynthesis; adenosylcobalamin from cob(II)yrinate a,c-diamide: step 7/7. Functionally, joins adenosylcobinamide-GDP and alpha-ribazole to generate adenosylcobalamin (Ado-cobalamin). Also synthesizes adenosylcobalamin 5'-phosphate from adenosylcobinamide-GDP and alpha-ribazole 5'-phosphate. The polypeptide is Adenosylcobinamide-GDP ribazoletransferase (Chlorobaculum parvum (strain DSM 263 / NCIMB 8327) (Chlorobium vibrioforme subsp. thiosulfatophilum)).